The chain runs to 314 residues: Olfactory receptor 5G3 (314 aa).

The Extracellular portion of the chain corresponds to 1 to 24 (MEDKNQTVVTEFLLLGLTDHPYQK). Asn-5 carries an N-linked (GlcNAc...) asparagine glycan. A helical transmembrane segment spans residues 25–45 (IVLFFMFLFVYLITLGGNLGM). At 46 to 97 (ITLIWIDPRLHTPMYFFLRHLSFVDICSSSSVVPKMLCNIFAEKKDITFLGC) the chain is on the cytoplasmic side. Cys-97 and Cys-179 are disulfide-bonded. A helical membrane pass occupies residues 98–118 (AAQMWFFGLFEAAECFLLAAM). The Extracellular portion of the chain corresponds to 119-143 (AYDRYVAICKPLLYTLIMSQQVCMQ). The chain crosses the membrane as a helical span at residues 144–164 (LVVGPYAMALISTMTHTIFTF). The Cytoplasmic portion of the chain corresponds to 165 to 167 (CLP). Residues 168 to 188 (FCGSNIINHFFCDIFPLLSLA) traverse the membrane as a helical segment. Topologically, residues 189–196 (CADTWVNK) are extracellular. A helical membrane pass occupies residues 197–217 (FVLFVLAGAIGVLSGLIIMVS). The Cytoplasmic portion of the chain corresponds to 218-237 (YICILMTILKIQTADGKQKA). A helical transmembrane segment spans residues 238–258 (FFTCFSHLAAVSILYGTLFLI). Topologically, residues 259-268 (YVRPSSSSSL) are extracellular. A helical membrane pass occupies residues 269-289 (GIYKVISLFYTVVIPMVNPLI). Residues 290-314 (YSLRNKEVKDAFRRKIERKKFIIGR) lie on the Cytoplasmic side of the membrane.

Belongs to the G-protein coupled receptor 1 family.

It localises to the cell membrane. In terms of biological role, odorant receptor. This is Olfactory receptor 5G3 (OR5G3) from Homo sapiens (Human).